The chain runs to 424 residues: UDP-N-acetylglucosamine 1-carboxyvinyltransferase (424 aa).

22 to 23 serves as a coordination point for phosphoenolpyruvate; that stretch reads KN. R93 is a UDP-N-acetyl-alpha-D-glucosamine binding site. The Proton donor role is filled by C117. C117 carries the post-translational modification 2-(S-cysteinyl)pyruvic acid O-phosphothioketal. Residues 122–126, D307, and V329 contribute to the UDP-N-acetyl-alpha-D-glucosamine site; that span reads RPIDL.

It belongs to the EPSP synthase family. MurA subfamily.

It localises to the cytoplasm. It carries out the reaction phosphoenolpyruvate + UDP-N-acetyl-alpha-D-glucosamine = UDP-N-acetyl-3-O-(1-carboxyvinyl)-alpha-D-glucosamine + phosphate. It functions in the pathway cell wall biogenesis; peptidoglycan biosynthesis. Cell wall formation. Adds enolpyruvyl to UDP-N-acetylglucosamine. The protein is UDP-N-acetylglucosamine 1-carboxyvinyltransferase of Chlorobium luteolum (strain DSM 273 / BCRC 81028 / 2530) (Pelodictyon luteolum).